A 501-amino-acid polypeptide reads, in one-letter code: Glycerol kinase (501 aa).

Thr12 lines the ADP pocket. ATP is bound by residues Thr12, Thr13, and Ser14. Sn-glycerol 3-phosphate is bound at residue Thr12. Arg16 is a binding site for ADP. Residues Arg82, Glu83, Tyr135, and Asp244 each coordinate sn-glycerol 3-phosphate. 5 residues coordinate glycerol: Arg82, Glu83, Tyr135, Asp244, and Gln245. Residues Thr266, Gly309, Gly409, and Asn413 each coordinate ADP. Residues Thr266, Gly309, and Gly409 each coordinate ATP.

This sequence belongs to the FGGY kinase family.

It catalyses the reaction glycerol + ATP = sn-glycerol 3-phosphate + ADP + H(+). It functions in the pathway polyol metabolism; glycerol degradation via glycerol kinase pathway; sn-glycerol 3-phosphate from glycerol: step 1/1. Its activity is regulated as follows. Inhibited by fructose 1,6-bisphosphate (FBP). Its function is as follows. Key enzyme in the regulation of glycerol uptake and metabolism. Catalyzes the phosphorylation of glycerol to yield sn-glycerol 3-phosphate. In Coxiella burnetii (strain RSA 331 / Henzerling II), this protein is Glycerol kinase.